Consider the following 243-residue polypeptide: DNA repair protein RecO (243 aa).

It belongs to the RecO family.

Functionally, involved in DNA repair and RecF pathway recombination. In Vibrio vulnificus (strain CMCP6), this protein is DNA repair protein RecO.